The sequence spans 130 residues: Guanylate kinase (130 aa).

The Guanylate kinase-like domain occupies 1-130 (KIFEDPTTSY…EKIQSRVNEA (130 aa)).

The protein belongs to the guanylate kinase family.

The protein resides in the cytoplasm. The enzyme catalyses GMP + ATP = GDP + ADP. Functionally, essential for recycling GMP and indirectly, cGMP. This Staphylococcus epidermidis protein is Guanylate kinase (gmk).